The sequence spans 325 residues: Cytochrome f (325 aa).

Residues 1–40 (MKTPELMAIWQRLKTACLVAIATFGLFFASDVLFPQAAAA) form the signal peptide. Tyr-41, Cys-62, Cys-65, and His-66 together coordinate heme. The helical transmembrane segment at 290-309 (IYGYMAFVAGIMLTQIFLVL) threads the bilayer.

It belongs to the cytochrome f family. In terms of assembly, the 4 large subunits of the cytochrome b6-f complex are cytochrome b6, subunit IV (17 kDa polypeptide, PetD), cytochrome f and the Rieske protein, while the 4 small subunits are PetG, PetL, PetM and PetN. The complex functions as a dimer. Heme serves as cofactor.

The protein resides in the cellular thylakoid membrane. Functionally, component of the cytochrome b6-f complex, which mediates electron transfer between photosystem II (PSII) and photosystem I (PSI), cyclic electron flow around PSI, and state transitions. In Picosynechococcus sp. (strain ATCC 27264 / PCC 7002 / PR-6) (Agmenellum quadruplicatum), this protein is Cytochrome f (petA).